The following is a 481-amino-acid chain: MFS transporter eqxG (481 aa).

The segment covering 1–13 (MATTDPAIAAPDD) has biased composition (low complexity). Residues 1-58 (MATTDPAIAAPDDSQLEAGRENIRANVGDALEKPSSSTGTMVDEPTDPNVVDWDGPHD) form a disordered region. A glycan (N-linked (GlcNAc...) asparagine) is linked at asparagine 64. A helical membrane pass occupies residues 72-92 (LHLVIVSLFTLAANLAATMFA). N-linked (GlcNAc...) asparagine glycosylation occurs at asparagine 106. Transmembrane regions (helical) follow at residues 111–131 (AMTV…LAPL), 146–166 (FVYV…MFLV), 169–189 (IICG…VADL), 201–221 (LFTV…TVIF), 276–296 (PIVL…FLLF), 315–335 (GLAY…FSVL), 353–373 (LILM…YGWT), 380–400 (WIVP…VVIP), 403–423 (IYLV…ANLL), and 439–459 (LYVS…CLLF).

It belongs to the major facilitator superfamily.

The protein localises to the cell membrane. Its function is as follows. Efflux pump that might be required for efficient secretion of equisetin or other secondary metabolies produced by the equisetin gene cluster. This Fusarium heterosporum protein is MFS transporter eqxG.